The primary structure comprises 540 residues: MRVAAATAAAGAGPAMAVWTRATKAGLVELLLRERWVRVVAELSGESLSLTGDAAAAELEPALGPAAAAFNGLPNGGGAGDSLPGSPSRGLGPPSPPAPPRGPAGEAGASPPVRRVRVVKQEAGGLGISIKGGRENRMPILISKIFPGLAADQSRALRLGDAILSVNGTDLRQATHDQAVQALKRAGKEVLLEVKFIREVTPYIKKPSLVSDLPWEGAAPQSPSFSGSEDSGSPKHQNSTKDRKIIPLKMCFAARNLSMPDLENRLIELHSPDSRNTLILRCKDTATAHSWFVAIHTNIMALLPQVLAELNAMLGATSTAGGSKEVKHIAWLAEQAKLDGGRQQWRPVLMAVTEKDLLLYDCMPWTRDAWASPCHSYPLVATRLVHSGSGCRSPSLGSDLTFATRTGSRQGIEMHLFRVETHRDLSSWTRILVQGCHAAAELIKEVSLGCMLNGQEVRLTIHYENGFTISRENGGSSSILYRYPFERLKMSADDGIRNLYLDFGGPEGELTMDLHSCPKPIVFVLHTFLSAKVTRMGLLV.

Positions 73–114 are disordered; it reads LPNGGGAGDSLPGSPSRGLGPPSPPAPPRGPAGEAGASPPVR. A compositionally biased stretch (low complexity) spans 81–92; sequence DSLPGSPSRGLG. Pro residues predominate over residues 93–102; that stretch reads PPSPPAPPRG. Ser95, Ser110, Ser129, Ser211, Ser222, Ser233, Ser393, and Ser395 each carry phosphoserine. A compositionally biased stretch (low complexity) spans 103–112; the sequence is PAGEAGASPP. One can recognise a PDZ domain in the interval 115–198; that stretch reads RVRVVKQEAG…EVLLEVKFIR (84 aa). 2 PH domains span residues 163-300 and 325-437; these read ILSV…TNIM and EVKH…QGCH. The segment at 220–240 is disordered; sequence PQSPSFSGSEDSGSPKHQNST. The span at 222–231 shows a compositional bias: low complexity; the sequence is SPSFSGSEDS. Residues 484 to 540 enclose the SU domain; sequence PFERLKMSADDGIRNLYLDFGGPEGELTMDLHSCPKPIVFVLHTFLSAKVTRMGLLV. The interval 518–540 is calmodulin-binding; it reads PKPIVFVLHTFLSAKVTRMGLLV.

Belongs to the syntrophin family. As to quaternary structure, monomer and homodimer. Interacts with the other members of the syntrophin family: SNTA1 and SNTB1; and with the sodium channel proteins SCN4A and SCN5A. Interacts with SAST, MAST205, microtubules and microtubule-associated proteins. Interacts with the dystrophin protein DMD and related proteins DTNA and UTRN, and with the neuroregulin receptor ERBB4. Interacts with PTPRN when phosphorylated, protecting PTPRN from protein cleavage by CAPN1. Dephosphorylation upon insulin stimulation disrupts the interaction with PTPRN and results in the cleavage of PTPRN. Interacts with DTNB. In terms of processing, phosphorylated. Partially dephosphorylated upon insulin stimulation. In terms of tissue distribution, ubiquitous. Isoform 1 is the predominant isoform. Weak level of isoform 2 is present in all tested tissues, except in liver and heart where it is highly expressed.

Its subcellular location is the membrane. The protein resides in the cytoplasmic vesicle. The protein localises to the secretory vesicle membrane. It localises to the cell junction. It is found in the cytoplasm. Its subcellular location is the cytoskeleton. In terms of biological role, adapter protein that binds to and probably organizes the subcellular localization of a variety of membrane proteins. May link various receptors to the actin cytoskeleton and the dystrophin glycoprotein complex. May play a role in the regulation of secretory granules via its interaction with PTPRN. This is Beta-2-syntrophin (SNTB2) from Homo sapiens (Human).